Consider the following 943-residue polypeptide: Leucine--tRNA ligase (943 aa).

Positions 40 to 51 (PYPSGAGLHVGH) match the 'HIGH' region motif. The short motif at 717–721 (KMSKS) is the 'KMSKS' region element. Residue Lys720 participates in ATP binding.

The protein belongs to the class-I aminoacyl-tRNA synthetase family.

The protein resides in the cytoplasm. It carries out the reaction tRNA(Leu) + L-leucine + ATP = L-leucyl-tRNA(Leu) + AMP + diphosphate. The protein is Leucine--tRNA ligase of Bacteroides fragilis (strain ATCC 25285 / DSM 2151 / CCUG 4856 / JCM 11019 / LMG 10263 / NCTC 9343 / Onslow / VPI 2553 / EN-2).